Here is a 222-residue protein sequence, read N- to C-terminus: Probable fructose-6-phosphate aldolase (222 aa).

Catalysis depends on lysine 87, which acts as the Schiff-base intermediate with substrate.

Belongs to the transaldolase family. Type 3A subfamily.

Its subcellular location is the cytoplasm. It catalyses the reaction beta-D-fructose 6-phosphate = dihydroxyacetone + D-glyceraldehyde 3-phosphate. In terms of biological role, catalyzes the reversible formation of fructose 6-phosphate from dihydroxyacetone and D-glyceraldehyde 3-phosphate via an aldolization reaction. In Streptococcus pneumoniae (strain ATCC 700669 / Spain 23F-1), this protein is Probable fructose-6-phosphate aldolase.